A 114-amino-acid polypeptide reads, in one-letter code: Hydrogenase maturation factor HypA (114 aa).

Residue H2 participates in Ni(2+) binding. Positions 73, 76, 89, and 92 each coordinate Zn(2+).

This sequence belongs to the HypA/HybF family.

Its function is as follows. Involved in the maturation of [NiFe] hydrogenases. Required for nickel insertion into the metal center of the hydrogenase. This chain is Hydrogenase maturation factor HypA, found in Syntrophus aciditrophicus (strain SB).